Consider the following 393-residue polypeptide: Arginine--pyruvate transaminase AruH (393 aa).

Lys237 carries the post-translational modification N6-(pyridoxal phosphate)lysine.

It belongs to the class-I pyridoxal-phosphate-dependent aminotransferase family. In terms of assembly, homodimer. It depends on pyridoxal 5'-phosphate as a cofactor.

It catalyses the reaction L-arginine + pyruvate = 5-guanidino-2-oxopentanoate + L-alanine. It participates in amino-acid degradation; L-arginine degradation. Functionally, catalyzes the conversion of L-arginine into 2-ketoarginine via transamination. L-arginine is the best substrate, but it can also use L-lysine, L-methionine, L-leucine, ornithine and L-glutamine, which indicates that it may have a broader physiological function in amino acid catabolism. This is Arginine--pyruvate transaminase AruH (aruH) from Pseudomonas aeruginosa (strain ATCC 15692 / DSM 22644 / CIP 104116 / JCM 14847 / LMG 12228 / 1C / PRS 101 / PAO1).